The chain runs to 365 residues: MRAIIIGIGQCGTKIADIFSLVDFEALAINTSKSDLEYLKHIPPERRILVGESIVGGKGVNANPLLGREAMKRDLPMVMKKISSLVGYEDVDIFFLTFGFGGGTGAGGTPVLAEALKEEYPDSLVVAIGALPLKEEGIRPTINAAITIDKLSRIVDSIIAIDNNKLKESDEDISQAYEKINYAIVERIASLLALIDVPGEQTLDASDLKFVLRAMGSFATVGYAKADATKIKSLSRLIIRSFENEGLYLDVNLESALYGLVAIHGPPEVLKAKEIFDALSELSQRIRGKQIFRGFYPDPREREVEVVTLLSGIYESKSIENIVITAKRYAREFMKAKEEGEMKKRELLKGLPDFEDIYPGEVDEG.

GTP-binding positions include 10-14 (QCGTK), 103-105 (GTG), Glu136, Asn163, and Asn181.

It belongs to the CetZ family.

The protein resides in the cytoplasm. Its function is as follows. Involved in cell shape control. The protein is Tubulin-like protein CetZ of Pyrococcus horikoshii (strain ATCC 700860 / DSM 12428 / JCM 9974 / NBRC 100139 / OT-3).